The following is a 284-amino-acid chain: MQQKVVHIGDIKVANDLPFVLFGGMNVLESRDLAMSICEHYVTVTQKLGIPYVFKASFDKANRSSIHSYRGPGLEEGMKIFQELKQTFGVKIITDVHESAQAQPVAEVVDVIQLPAFLARQTDLVEAMARTGAVINVKKPQFISPGQMGNIVDKFKEGGNDQVILCDRGSNFGYDNLVVDMLGFNVMAQATGGHPVIFDVTHSLQCRDPFGAASGGRRAQVAELARAGMAVGIAGLFLEAHPDPANAMCDGPSALPLAKLEPFLSQMKAIDDVVKSFPQLDTSK.

Belongs to the KdsA family.

The protein localises to the cytoplasm. It carries out the reaction D-arabinose 5-phosphate + phosphoenolpyruvate + H2O = 3-deoxy-alpha-D-manno-2-octulosonate-8-phosphate + phosphate. Its pathway is carbohydrate biosynthesis; 3-deoxy-D-manno-octulosonate biosynthesis; 3-deoxy-D-manno-octulosonate from D-ribulose 5-phosphate: step 2/3. It participates in bacterial outer membrane biogenesis; lipopolysaccharide biosynthesis. This is 2-dehydro-3-deoxyphosphooctonate aldolase from Photorhabdus laumondii subsp. laumondii (strain DSM 15139 / CIP 105565 / TT01) (Photorhabdus luminescens subsp. laumondii).